The primary structure comprises 625 residues: Arginine--tRNA ligase (625 aa).

The 'HIGH' region motif lies at 128–138; the sequence is VNPTKPLHMGH.

Belongs to the class-I aminoacyl-tRNA synthetase family.

It localises to the cytoplasm. It carries out the reaction tRNA(Arg) + L-arginine + ATP = L-arginyl-tRNA(Arg) + AMP + diphosphate. The polypeptide is Arginine--tRNA ligase (argS) (Pyrococcus abyssi (strain GE5 / Orsay)).